The following is an 808-amino-acid chain: Phospholipase D alpha 1 (808 aa).

A C2 domain is found at 1–125 (MAKTLLHGTL…LEGEEVDKWV (125 aa)). Residue aspartate 186 coordinates Ca(2+). Residues 326–364 (TIFTHHQKIVVVDSEMPTSGSENRRVVSFVGGIDLCDGR) form the PLD phosphodiesterase 1 domain. Residues histidine 331, lysine 333, and aspartate 338 contribute to the active site. Histidine 331 is an a 1,2-diacyl-sn-glycero-3-phosphate binding site. Residues histidine 370 and histidine 404 each coordinate Ca(2+). The region spanning 654–681 (FMIYVHAKMMIVDDEYIIIGSANINQRS) is the PLD phosphodiesterase 2 domain. Residues histidine 659, lysine 661, and aspartate 666 contribute to the active site. Histidine 659 serves as a coordination point for a 1,2-diacyl-sn-glycero-3-phosphate. Glutamate 720 is a binding site for Ca(2+).

The protein belongs to the phospholipase D family. C2-PLD subfamily. The cofactor is Ca(2+).

It carries out the reaction a 1,2-diacyl-sn-glycero-3-phosphocholine + H2O = a 1,2-diacyl-sn-glycero-3-phosphate + choline + H(+). In terms of biological role, hydrolyzes glycerol-phospholipids at the terminal phosphodiesteric bond. Plays an important role in various cellular processes. The sequence is that of Phospholipase D alpha 1 (PLD1) from Spuriopimpinella brachycarpa (Chamnamul).